The following is a 131-amino-acid chain: UPF0212 protein TK1194 (131 aa).

The protein belongs to the UPF0212 family.

This Thermococcus kodakarensis (strain ATCC BAA-918 / JCM 12380 / KOD1) (Pyrococcus kodakaraensis (strain KOD1)) protein is UPF0212 protein TK1194.